Consider the following 445-residue polypeptide: Exodeoxyribonuclease 7 large subunit (445 aa).

It belongs to the XseA family. In terms of assembly, heterooligomer composed of large and small subunits.

Its subcellular location is the cytoplasm. It catalyses the reaction Exonucleolytic cleavage in either 5'- to 3'- or 3'- to 5'-direction to yield nucleoside 5'-phosphates.. Functionally, bidirectionally degrades single-stranded DNA into large acid-insoluble oligonucleotides, which are then degraded further into small acid-soluble oligonucleotides. The chain is Exodeoxyribonuclease 7 large subunit from Xanthomonas oryzae pv. oryzae (strain PXO99A).